The following is a 419-amino-acid chain: Squamosa promoter-binding-like protein 2 (419 aa).

The tract at residues 77–96 (SAEVRTHNFTSETGESLPGE) is disordered. An SBP-type zinc finger spans residues 166–243 (TPHCQVEGCN…SDHNARRRKP (78 aa)). Zn(2+) is bound by residues C169, C174, C191, H194, C210, C213, H217, and C229. The Bipartite nuclear localization signal signature appears at 226–242 (KRSCRRRLSDHNARRRK). Residues 230–249 (RRRLSDHNARRRKPNPGRTY) form a disordered region.

Zn(2+) serves as cofactor.

It localises to the nucleus. Trans-acting factor that binds specifically to the consensus nucleotide sequence 5'-TNCGTACAA-3'. The polypeptide is Squamosa promoter-binding-like protein 2 (SPL2) (Arabidopsis thaliana (Mouse-ear cress)).